Reading from the N-terminus, the 243-residue chain is Type III pantothenate kinase (243 aa).

6–13 is an ATP binding site; sequence DIGNTNLK. 101 to 104 contributes to the substrate binding site; it reads GSDI. Residue D103 is the Proton acceptor of the active site. Position 125 (T125) interacts with ATP. Residue T176 coordinates substrate.

Belongs to the type III pantothenate kinase family. In terms of assembly, homodimer. Requires NH4(+) as cofactor. K(+) is required as a cofactor.

It is found in the cytoplasm. It catalyses the reaction (R)-pantothenate + ATP = (R)-4'-phosphopantothenate + ADP + H(+). Its pathway is cofactor biosynthesis; coenzyme A biosynthesis; CoA from (R)-pantothenate: step 1/5. Its function is as follows. Catalyzes the phosphorylation of pantothenate (Pan), the first step in CoA biosynthesis. This is Type III pantothenate kinase from Mycoplasma mobile (strain ATCC 43663 / 163K / NCTC 11711) (Mesomycoplasma mobile).